We begin with the raw amino-acid sequence, 732 residues long: uncharacterized protein (732 aa).

The protein belongs to the mimivirus L137 family.

This is an uncharacterized protein from Acanthamoeba polyphaga mimivirus (APMV).